Consider the following 393-residue polypeptide: MTRIGTPLSPTATRVLLCGCGELGKEVVIELQRLGVEVIAVDRYANAPAMQVAHRSHVINMLDGAALRAVIEAEKPHFIVPEIEAIATATLVALEAEGFTVIPTARAAQLTMNREGIRRLAAEELDLPTSPYHFADTFEDYSKAVQDLGFPCVVKPVMSSSGKGQSLLRSADDVQKAWDYAQEGGRAGKGRVIIEGFIDFDYEITLLTVRHVGGTTFCAPVGHRQEKGDYQESWQPQAMSPVALAESERVAKAVTEALGGRGLFGVELFIKGDQVWFSEVSPRPHDTGLVTLISQDLSQFALHARAILGLPVPLIRQFGPSASAVILVEGQSTQTAFANLGAALSEPDTALRLFGKPEVNGQRRMGVALARDESIEAARAKATRASQAVVVEL.

Residues 22 to 23 and glutamate 82 each bind N(1)-(5-phospho-beta-D-ribosyl)glycinamide; that span reads EL. ATP-binding positions include arginine 114, lysine 155, 160-165, 195-198, and glutamate 203; these read SSGKGQ and EGFI. The region spanning 119–308 is the ATP-grasp domain; the sequence is RLAAEELDLP…QFALHARAIL (190 aa). Positions 267 and 279 each coordinate Mg(2+). Residues aspartate 286, lysine 356, and 363–364 contribute to the N(1)-(5-phospho-beta-D-ribosyl)glycinamide site; that span reads RR.

The protein belongs to the PurK/PurT family. Homodimer.

The enzyme catalyses N(1)-(5-phospho-beta-D-ribosyl)glycinamide + formate + ATP = N(2)-formyl-N(1)-(5-phospho-beta-D-ribosyl)glycinamide + ADP + phosphate + H(+). It functions in the pathway purine metabolism; IMP biosynthesis via de novo pathway; N(2)-formyl-N(1)-(5-phospho-D-ribosyl)glycinamide from N(1)-(5-phospho-D-ribosyl)glycinamide (formate route): step 1/1. In terms of biological role, involved in the de novo purine biosynthesis. Catalyzes the transfer of formate to 5-phospho-ribosyl-glycinamide (GAR), producing 5-phospho-ribosyl-N-formylglycinamide (FGAR). Formate is provided by PurU via hydrolysis of 10-formyl-tetrahydrofolate. This Pseudomonas fluorescens (strain Pf0-1) protein is Formate-dependent phosphoribosylglycinamide formyltransferase.